The sequence spans 449 residues: Trigger factor (449 aa).

The region spanning 160–231 is the PPIase FKBP-type domain; the sequence is TDQVTIEELG…VQSVQTKQLQ (72 aa). The segment at 411–449 is disordered; sequence GQQVAGRQEAGAEQTAQAAEQESGQPQAEGEQAAEQRGE. The segment covering 415-443 has biased composition (low complexity); that stretch reads AGRQEAGAEQTAQAAEQESGQPQAEGEQA.

It belongs to the FKBP-type PPIase family. Tig subfamily.

The protein resides in the cytoplasm. It carries out the reaction [protein]-peptidylproline (omega=180) = [protein]-peptidylproline (omega=0). In terms of biological role, involved in protein export. Acts as a chaperone by maintaining the newly synthesized protein in an open conformation. Functions as a peptidyl-prolyl cis-trans isomerase. The protein is Trigger factor of Deinococcus geothermalis (strain DSM 11300 / CIP 105573 / AG-3a).